Consider the following 1165-residue polypeptide: Immunoglobulin superfamily member 3 (1165 aa).

The N-terminal stretch at 1–20 (MGTAAGLLLAALLLAGTSWA) is a signal peptide. Topologically, residues 21–1095 (QREVNIQQGP…LQSTICANDA (1075 aa)) are extracellular. Ig-like C2-type domains are found at residues 22–139 (REVN…AKMN), 144–262 (PDTL…WFPL), 276–386 (PTDK…RGPS), 406–527 (PLRT…WQLL), 545–661 (FAVT…WTQL), 678–800 (PRLQ…EEAS), 810–934 (PDAN…WYKR), and 951–1067 (PALQ…WYLL). Cystine bridges form between Cys-43–Cys-121 and Cys-168–Cys-246. Residues 250-252 (EWI) carry the EWI motif motif. 6 disulfide bridges follow: Cys-302/Cys-376, Cys-432/Cys-511, Cys-566/Cys-645, Cys-701/Cys-779, Cys-835/Cys-918, and Cys-974/Cys-1051. Residues 1096-1116 (LFYLVFFYPFPIFGILIITIL) form a helical membrane-spanning segment. The Cytoplasmic portion of the chain corresponds to 1117 to 1165 (LVRFRHRPTSKPGEGKNGVPLLWIKEPHLNYSPTCLEPPVLSIHPGTID).

The protein localises to the membrane. The protein is Immunoglobulin superfamily member 3 (igsf3) of Xenopus laevis (African clawed frog).